Consider the following 294-residue polypeptide: MLGDLFTKPKKRKYATIPSDGTKADVPEGIMTKCPECKKIMYTKELQKNLMVCNYCGFHHPIGAKARIDMLVDEGSFEEIDASLTTANPLGFEDYMDRIEKDKQKSGLNEAIVTGHATIGGNPLVIAVMDSRFRMASMGSVVGEKILRAVEDADKTNKPFVIFTASGGARMQEGMLSLMQMAKTSAAFKRFSNHGGLIITVMTHPTTGGVSASFASLGDYNFAEPGALIGFAGRRVIEQTVREELPEDFQTAEFLLKHGQLDDCISRLDLQNKLSFILSIHVKAPGVGGEVDGE.

In terms of domain architecture, CoA carboxyltransferase N-terminal spans 30–294 (IMTKCPECKK…PGVGGEVDGE (265 aa)). Zn(2+) is bound by residues Cys-34, Cys-37, Cys-53, and Cys-56. Residues 34–56 (CPECKKIMYTKELQKNLMVCNYC) form a C4-type zinc finger.

It belongs to the AccD/PCCB family. Acetyl-CoA carboxylase is a heterohexamer composed of biotin carboxyl carrier protein (AccB), biotin carboxylase (AccC) and two subunits each of ACCase subunit alpha (AccA) and ACCase subunit beta (AccD). Zn(2+) is required as a cofactor.

It is found in the cytoplasm. The catalysed reaction is N(6)-carboxybiotinyl-L-lysyl-[protein] + acetyl-CoA = N(6)-biotinyl-L-lysyl-[protein] + malonyl-CoA. The protein operates within lipid metabolism; malonyl-CoA biosynthesis; malonyl-CoA from acetyl-CoA: step 1/1. Functionally, component of the acetyl coenzyme A carboxylase (ACC) complex. Biotin carboxylase (BC) catalyzes the carboxylation of biotin on its carrier protein (BCCP) and then the CO(2) group is transferred by the transcarboxylase to acetyl-CoA to form malonyl-CoA. This is Acetyl-coenzyme A carboxylase carboxyl transferase subunit beta from Listeria monocytogenes serovar 1/2a (strain ATCC BAA-679 / EGD-e).